Reading from the N-terminus, the 77-residue chain is U8-lycotoxin-Ls1m (77 aa).

The first 20 residues, 1 to 20 (MKLMIFTGLVLFAIVSLIEA), serve as a signal peptide directing secretion. A propeptide spanning residues 21–26 (QAENEK) is cleaved from the precursor.

The protein belongs to the neurotoxin 19 (CSTX) family. 08 (U8-Lctx) subfamily. Post-translationally, contains 4 disulfide bonds. Expressed by the venom gland.

It is found in the secreted. In Lycosa singoriensis (Wolf spider), this protein is U8-lycotoxin-Ls1m.